Consider the following 147-residue polypeptide: Small ribosomal subunit protein bS6 (147 aa).

A compositionally biased stretch (basic and acidic residues) spans 97–141 (EEGPSAMMRKADRDRERDDRGGGFRGDREGGFRGDRGPRRPREEA). Positions 97–147 (EEGPSAMMRKADRDRERDDRGGGFRGDREGGFRGDRGPRRPREEAPAVVEE) are disordered.

This sequence belongs to the bacterial ribosomal protein bS6 family.

In terms of biological role, binds together with bS18 to 16S ribosomal RNA. This is Small ribosomal subunit protein bS6 from Nitrobacter hamburgensis (strain DSM 10229 / NCIMB 13809 / X14).